The following is a 61-amino-acid chain: Sperm protamine P1 (61 aa).

Positions 1–61 are disordered; the sequence is MARYRRRSRS…RRYSRRGRRR (61 aa).

This sequence belongs to the protamine P1 family. In terms of tissue distribution, testis.

It localises to the nucleus. Its subcellular location is the chromosome. Protamines substitute for histones in the chromatin of sperm during the haploid phase of spermatogenesis. They compact sperm DNA into a highly condensed, stable and inactive complex. This is Sperm protamine P1 (PRM1) from Dasyurus hallucatus (Northern quoll).